A 443-amino-acid polypeptide reads, in one-letter code: tRNA-2-methylthio-N(6)-dimethylallyladenosine synthase (443 aa).

An MTTase N-terminal domain is found at 12–126 (KTFRVKSFGC…LPEMVADAAA (115 aa)). Residues C21, C57, C89, C162, C166, and C169 each contribute to the [4Fe-4S] cluster site. A Radical SAM core domain is found at 148 to 380 (RKSAPTAFLT…QAALNRDQLA (233 aa)). The 61-residue stretch at 383-443 (KASVGKTCEV…GPNSISGRLA (61 aa)) folds into the TRAM domain.

Belongs to the methylthiotransferase family. MiaB subfamily. As to quaternary structure, monomer. Requires [4Fe-4S] cluster as cofactor.

It is found in the cytoplasm. The catalysed reaction is N(6)-dimethylallyladenosine(37) in tRNA + (sulfur carrier)-SH + AH2 + 2 S-adenosyl-L-methionine = 2-methylsulfanyl-N(6)-dimethylallyladenosine(37) in tRNA + (sulfur carrier)-H + 5'-deoxyadenosine + L-methionine + A + S-adenosyl-L-homocysteine + 2 H(+). Its function is as follows. Catalyzes the methylthiolation of N6-(dimethylallyl)adenosine (i(6)A), leading to the formation of 2-methylthio-N6-(dimethylallyl)adenosine (ms(2)i(6)A) at position 37 in tRNAs that read codons beginning with uridine. This Novosphingobium aromaticivorans (strain ATCC 700278 / DSM 12444 / CCUG 56034 / CIP 105152 / NBRC 16084 / F199) protein is tRNA-2-methylthio-N(6)-dimethylallyladenosine synthase.